The following is a 149-amino-acid chain: D-aminoacyl-tRNA deacylase (149 aa).

The short motif at Gly-137 to Pro-138 is the Gly-cisPro motif, important for rejection of L-amino acids element.

It belongs to the DTD family. Homodimer.

Its subcellular location is the cytoplasm. The enzyme catalyses glycyl-tRNA(Ala) + H2O = tRNA(Ala) + glycine + H(+). It carries out the reaction a D-aminoacyl-tRNA + H2O = a tRNA + a D-alpha-amino acid + H(+). Functionally, an aminoacyl-tRNA editing enzyme that deacylates mischarged D-aminoacyl-tRNAs. Also deacylates mischarged glycyl-tRNA(Ala), protecting cells against glycine mischarging by AlaRS. Acts via tRNA-based rather than protein-based catalysis; rejects L-amino acids rather than detecting D-amino acids in the active site. By recycling D-aminoacyl-tRNA to D-amino acids and free tRNA molecules, this enzyme counteracts the toxicity associated with the formation of D-aminoacyl-tRNA entities in vivo and helps enforce protein L-homochirality. This Thermoanaerobacter pseudethanolicus (strain ATCC 33223 / 39E) (Clostridium thermohydrosulfuricum) protein is D-aminoacyl-tRNA deacylase.